Reading from the N-terminus, the 327-residue chain is GMP reductase (327 aa).

C176 (thioimidate intermediate) is an active-site residue. 205-228 (IIADGGIRTHGDIAKSIRFGASMV) serves as a coordination point for NADP(+).

It belongs to the IMPDH/GMPR family. GuaC type 2 subfamily.

It carries out the reaction IMP + NH4(+) + NADP(+) = GMP + NADPH + 2 H(+). Its function is as follows. Catalyzes the irreversible NADPH-dependent deamination of GMP to IMP. It functions in the conversion of nucleobase, nucleoside and nucleotide derivatives of G to A nucleotides, and in maintaining the intracellular balance of A and G nucleotides. The protein is GMP reductase of Streptococcus pyogenes serotype M49 (strain NZ131).